We begin with the raw amino-acid sequence, 221 residues long: Urease accessory protein UreF (221 aa).

Belongs to the UreF family. As to quaternary structure, ureD, UreF and UreG form a complex that acts as a GTP-hydrolysis-dependent molecular chaperone, activating the urease apoprotein by helping to assemble the nickel containing metallocenter of UreC. The UreE protein probably delivers the nickel.

The protein resides in the cytoplasm. Functionally, required for maturation of urease via the functional incorporation of the urease nickel metallocenter. This is Urease accessory protein UreF from Microcystis aeruginosa (strain NIES-843 / IAM M-2473).